The primary structure comprises 437 residues: MLDIQQLRSNLQNIITRLAQRGYDFPVADFESLESQRKSVQTLTQTLQAKRNSASKQIGIARQRGEDVSLIMAEVANMGDELKQAENQLEAVQTRLQQLLLEIPNLPHDSVPAGKDENDNLEMRRWGTPKTFDFPVQDHASIGEHLKLIDFETAAKLSGARFSLLKGGLARLHRALAQFMLDTHTQENGYNEIYVPYLVNADCLRGTGQLPKFEQDLFAVRSGAQEEADNPDKTGPAGLHLIPTAEVPLTNIVRNTIVPLENLPLQFVAHTPCFRSEAGSYGRDTRGLIRQHQFDKVELVQITHPEKSHEALESLVGHAEKILQKLELPYRVMLLCTGDMGFSAAKTYDIEVWLPAQQAYREISSCSNCEAFQARRMQARFRKGQEKPELLHTLNGSGLAVGRTLVAILENYQNEDGSITIPEILRAYMGGIERIGL.

244–246 (TAE) contacts L-serine. 275–277 (RSE) serves as a coordination point for ATP. Glutamate 298 serves as a coordination point for L-serine. 362 to 365 (EISS) provides a ligand contact to ATP. L-serine is bound at residue serine 397.

Belongs to the class-II aminoacyl-tRNA synthetase family. Type-1 seryl-tRNA synthetase subfamily. Homodimer. The tRNA molecule binds across the dimer.

The protein localises to the cytoplasm. It carries out the reaction tRNA(Ser) + L-serine + ATP = L-seryl-tRNA(Ser) + AMP + diphosphate + H(+). It catalyses the reaction tRNA(Sec) + L-serine + ATP = L-seryl-tRNA(Sec) + AMP + diphosphate + H(+). It functions in the pathway aminoacyl-tRNA biosynthesis; selenocysteinyl-tRNA(Sec) biosynthesis; L-seryl-tRNA(Sec) from L-serine and tRNA(Sec): step 1/1. Functionally, catalyzes the attachment of serine to tRNA(Ser). Is also able to aminoacylate tRNA(Sec) with serine, to form the misacylated tRNA L-seryl-tRNA(Sec), which will be further converted into selenocysteinyl-tRNA(Sec). The protein is Serine--tRNA ligase of Nitrosomonas europaea (strain ATCC 19718 / CIP 103999 / KCTC 2705 / NBRC 14298).